The sequence spans 292 residues: 4-hydroxy-tetrahydrodipicolinate synthase (292 aa).

T45 contacts pyruvate. Y133 acts as the Proton donor/acceptor in catalysis. The Schiff-base intermediate with substrate role is filled by K161. Residue I203 participates in pyruvate binding.

Belongs to the DapA family. Homodimer.

Its subcellular location is the cytoplasm. The enzyme catalyses L-aspartate 4-semialdehyde + pyruvate = (2S,4S)-4-hydroxy-2,3,4,5-tetrahydrodipicolinate + H2O + H(+). The protein operates within amino-acid biosynthesis; L-lysine biosynthesis via DAP pathway; (S)-tetrahydrodipicolinate from L-aspartate: step 3/4. Functionally, catalyzes the condensation of (S)-aspartate-beta-semialdehyde [(S)-ASA] and pyruvate to 4-hydroxy-tetrahydrodipicolinate (HTPA). In Ectopseudomonas mendocina (strain ymp) (Pseudomonas mendocina), this protein is 4-hydroxy-tetrahydrodipicolinate synthase.